The chain runs to 648 residues: Sodium/nucleoside cotransporter 1 (648 aa).

Over 1-83 the chain is Cytoplasmic; it reads MADDTPRQRE…LCREHWQLFE (83 aa). Residues 84–104 form a helical membrane-spanning segment; that stretch reads WISKGLLSTAYIGFLIVACLL. Topologically, residues 105-108 are extracellular; the sequence is DFPR. Residues 109–129 traverse the membrane as a helical segment; it reads ALALFVITCVVLVFLAYNLLK. Residues 130–147 are Cytoplasmic-facing; it reads RLLGSKLKKCVKFQGHSC. Residues 148 to 168 form a helical membrane-spanning segment; sequence LSLWLKRGLALAAGLGVILWL. At 169 to 175 the chain is on the extracellular side; that stretch reads SLDTAQR. Residues 176–196 form a helical membrane-spanning segment; it reads PEQLVSFAGICVFLVLLFAGS. The Cytoplasmic segment spans residues 197-201; the sequence is KHHRA. Residues 202–222 form a helical membrane-spanning segment; it reads VSWRAVSWGLGLQFVLGLFVI. Residues 223-265 are Extracellular-facing; sequence RTEPGFVAFQWLGDQIRVFLSYTEAGSSFVFGEALVKDVFAFQ. A helical transmembrane segment spans residues 266–286; sequence VLPIIVFFSCVMSVLYYLGLM. Residues 287–294 lie on the Cytoplasmic side of the membrane; it reads QWVILKIA. The chain crosses the membrane as a helical span at residues 295-318; sequence WLMQVTMGTSATETLSVAGNIFVS. Residues 319–339 lie on the Extracellular side of the membrane; it reads QTEAPLLIRPYLADMTLSEVH. A helical transmembrane segment spans residues 340–360; it reads VVMTGGYATIAGSLLGAYISF. Gly361 is a topological domain (cytoplasmic). The helical transmembrane segment at 362-380 threads the bilayer; it reads IDASSLIAASVMAAPCALA. Residues 381-427 lie on the Extracellular side of the membrane; it reads LSKLVYPEVEESKFRSEEGVKLTYGDAQNLVEAASAGAAISVKVVAN. A helical transmembrane segment spans residues 428–448; sequence IAANLIAFLAVLAFINAALSW. Residues 449 to 470 are Cytoplasmic-facing; sequence LGDMVDIQGLSFQLICSYVLRP. Residues 471-491 traverse the membrane as a helical segment; that stretch reads VAFLMGVAWEDCPVVAELLGI. Topologically, residues 492–531 are extracellular; the sequence is KLFLNEFVAYQELSQYKQRRLAGAEEWLGDKKQWISVRAE. Residues 532–552 form a helical membrane-spanning segment; it reads ILTTYALCGFANFSSIGIMLG. Residues 553 to 571 are Cytoplasmic-facing; sequence GLTSMVPQRRSDFSQIVLR. The helical transmembrane segment at 572–592 threads the bilayer; the sequence is ALITGAFVSLVNACVAGILYV. Over 593-648 the chain is Extracellular; the sequence is PRGVEVDCMSLLNQTVSSSSFEVYLCCRQVFQNTSLEFGQEALHNCCRFYNHTVCT. N-linked (GlcNAc...) asparagine glycans are attached at residues Asn605, Asn625, and Asn643.

The protein belongs to the concentrative nucleoside transporter (CNT) (TC 2.A.41) family. N-glycosylated. N-glycosylation is required for localization to the plasma membrane and the transporter activity.

Its subcellular location is the cell membrane. It localises to the apical cell membrane. The catalysed reaction is uridine(out) + Na(+)(out) = uridine(in) + Na(+)(in). It carries out the reaction thymidine(out) + Na(+)(out) = thymidine(in) + Na(+)(in). The enzyme catalyses cytidine(out) + Na(+)(out) = cytidine(in) + Na(+)(in). It catalyses the reaction adenosine(out) + Na(+)(out) = adenosine(in) + Na(+)(in). Its activity is regulated as follows. Due to its high apparent affinity but slow transport, adenosine could act as a negative regulator of pyrimidine transport under some conditions. Functionally, sodium and pyrimidine nucleoside symporter of the plasma membrane that imports uridine, thymidine and cytidine into cells by coupling their transport to the transmembrane sodium electrochemical gradient. Also transports adenosine, an atypical substrate transported with high apparent affinity, but low maximum velocity. Therefore, exhibits the transport characteristics of the nucleoside transport system cit or N2 subtype (N2/cit). Involved in renal nucleoside (re)absorption. In Mus musculus (Mouse), this protein is Sodium/nucleoside cotransporter 1.